The chain runs to 95 residues: Putative septation protein SpoVG (95 aa).

The protein belongs to the SpoVG family.

Its function is as follows. Could be involved in septation. The chain is Putative septation protein SpoVG from Clostridium botulinum (strain ATCC 19397 / Type A).